Consider the following 334-residue polypeptide: MKQVVYIANSESKNIEVWNLCKSGKMNLIQKIETDGKIQPINIIQKRNLLYAGIFPDNKIITYSINHNGFLEKKNESNIPGKANYISFDKKKEFLFCSSYHSNFISVSPLNKFGIPQNPIQIIYNIEGCHAAKMNYKYNILFVISLKEDCIYLYYLTDFGILKSTEQNILHTQKKSGPRHIIFHPNQDFIYTINELNGTIDVWKIYKKNNVIKVKNIQNIHVLKNRFLKDYWCSDIHITSCGRFLYACDRFFNIISLFHINQNDNKLVFFKSYDTEEQPRSFNINSHNTHLIVAGEKSNTFIIYGISNSTGELKKINVYSTGQRPVWILIHALC.

This sequence belongs to the cycloisomerase 2 family.

It catalyses the reaction 6-phospho-D-glucono-1,5-lactone + H2O = 6-phospho-D-gluconate + H(+). The protein operates within carbohydrate degradation; pentose phosphate pathway; D-ribulose 5-phosphate from D-glucose 6-phosphate (oxidative stage): step 2/3. Functionally, catalyzes the hydrolysis of 6-phosphogluconolactone to 6-phosphogluconate. The chain is 6-phosphogluconolactonase from Buchnera aphidicola subsp. Acyrthosiphon pisum (strain Tuc7).